Here is a 297-residue protein sequence, read N- to C-terminus: Glycerol-3-phosphate dehydrogenase [NAD(P)+] (297 aa).

NADPH is bound by residues tryptophan 11, arginine 33, and lysine 79. Sn-glycerol 3-phosphate-binding residues include lysine 79, glycine 107, and serine 109. Alanine 111 serves as a coordination point for NADPH. Sn-glycerol 3-phosphate contacts are provided by lysine 161, aspartate 214, serine 224, arginine 225, and asparagine 226. Catalysis depends on lysine 161, which acts as the Proton acceptor. Arginine 225 lines the NADPH pocket. Residues valine 249 and glutamate 251 each contribute to the NADPH site.

Belongs to the NAD-dependent glycerol-3-phosphate dehydrogenase family.

It localises to the cytoplasm. The enzyme catalyses sn-glycerol 3-phosphate + NAD(+) = dihydroxyacetone phosphate + NADH + H(+). It catalyses the reaction sn-glycerol 3-phosphate + NADP(+) = dihydroxyacetone phosphate + NADPH + H(+). Its pathway is membrane lipid metabolism; glycerophospholipid metabolism. In terms of biological role, catalyzes the reduction of the glycolytic intermediate dihydroxyacetone phosphate (DHAP) to sn-glycerol 3-phosphate (G3P), the key precursor for phospholipid synthesis. The protein is Glycerol-3-phosphate dehydrogenase [NAD(P)+] of Campylobacter jejuni subsp. doylei (strain ATCC BAA-1458 / RM4099 / 269.97).